Here is a 91-residue protein sequence, read N- to C-terminus: UPF0223 protein SACOL1106 (91 aa).

This sequence belongs to the UPF0223 family.

This Staphylococcus aureus (strain COL) protein is UPF0223 protein SACOL1106.